Reading from the N-terminus, the 217-residue chain is Deoxyribose-phosphate aldolase (217 aa).

The Proton donor/acceptor role is filled by aspartate 95. Lysine 156 (schiff-base intermediate with acetaldehyde) is an active-site residue. Lysine 184 serves as the catalytic Proton donor/acceptor.

Belongs to the DeoC/FbaB aldolase family. DeoC type 1 subfamily.

It is found in the cytoplasm. The catalysed reaction is 2-deoxy-D-ribose 5-phosphate = D-glyceraldehyde 3-phosphate + acetaldehyde. The protein operates within carbohydrate degradation; 2-deoxy-D-ribose 1-phosphate degradation; D-glyceraldehyde 3-phosphate and acetaldehyde from 2-deoxy-alpha-D-ribose 1-phosphate: step 2/2. Catalyzes a reversible aldol reaction between acetaldehyde and D-glyceraldehyde 3-phosphate to generate 2-deoxy-D-ribose 5-phosphate. This is Deoxyribose-phosphate aldolase from Thermosynechococcus vestitus (strain NIES-2133 / IAM M-273 / BP-1).